The sequence spans 88 residues: MLTKEEKKAIIEEYQLEEGDTGSPEVQVALLTARIKNLTEHLKEHKHDYHSRRGLLKMVGKRKKLLRYLKRKDINRYRDLINRLGIRG.

The protein belongs to the universal ribosomal protein uS15 family. In terms of assembly, part of the 30S ribosomal subunit. Forms a bridge to the 50S subunit in the 70S ribosome, contacting the 23S rRNA.

One of the primary rRNA binding proteins, it binds directly to 16S rRNA where it helps nucleate assembly of the platform of the 30S subunit by binding and bridging several RNA helices of the 16S rRNA. Functionally, forms an intersubunit bridge (bridge B4) with the 23S rRNA of the 50S subunit in the ribosome. This is Small ribosomal subunit protein uS15 from Halothermothrix orenii (strain H 168 / OCM 544 / DSM 9562).